We begin with the raw amino-acid sequence, 729 residues long: Pentatricopeptide repeat-containing protein At5g01110 (729 aa).

The disordered stretch occupies residues 26–45 (TSSSPVFEPSSSSSSSSSSA). Low complexity predominate over residues 27 to 45 (SSSPVFEPSSSSSSSSSSA). PPR repeat units follow at residues 112–147 (TSLS…GVSR), 164–198 (NDSV…GFTV), 199–233 (SIDA…GVGI), 234–268 (NVYT…GVYP), 269–303 (DIVT…GFSP), 304–338 (GVYT…GLSP), 339–373 (DSTT…DVVP), 374–408 (DLVC…GLIP), 409–443 (DNVI…GCAM), 444–478 (DVVT…ALFP), 479–513 (DSYT…RIRL), 514–548 (DVVT…EILP), 549–583 (TPIS…NIKP), 584–618 (TVMI…GFVP), 619–649 (DCIS…MEEE), 656–690 (DVFT…GVNP), and 691–725 (DRST…GFSP).

It belongs to the PPR family. P subfamily.

This Arabidopsis thaliana (Mouse-ear cress) protein is Pentatricopeptide repeat-containing protein At5g01110.